The sequence spans 287 residues: Pyridoxal 5'-phosphate synthase subunit PdxS (287 aa).

D21 is a binding site for D-ribose 5-phosphate. K78 (schiff-base intermediate with D-ribose 5-phosphate) is an active-site residue. D-ribose 5-phosphate is bound at residue G150. Position 162 (R162) interacts with D-glyceraldehyde 3-phosphate. D-ribose 5-phosphate contacts are provided by residues G211 and 232-233 (GS).

Belongs to the PdxS/SNZ family. In the presence of PdxT, forms a dodecamer of heterodimers.

The catalysed reaction is aldehydo-D-ribose 5-phosphate + D-glyceraldehyde 3-phosphate + L-glutamine = pyridoxal 5'-phosphate + L-glutamate + phosphate + 3 H2O + H(+). It functions in the pathway cofactor biosynthesis; pyridoxal 5'-phosphate biosynthesis. Its function is as follows. Catalyzes the formation of pyridoxal 5'-phosphate from ribose 5-phosphate (RBP), glyceraldehyde 3-phosphate (G3P) and ammonia. The ammonia is provided by the PdxT subunit. Can also use ribulose 5-phosphate and dihydroxyacetone phosphate as substrates, resulting from enzyme-catalyzed isomerization of RBP and G3P, respectively. In Francisella tularensis subsp. tularensis (strain FSC 198), this protein is Pyridoxal 5'-phosphate synthase subunit PdxS.